Consider the following 112-residue polypeptide: Probable small nuclear ribonucleoprotein Sm D2 (112 aa).

A compositionally biased stretch (basic and acidic residues) spans 1–15 (MSRMNDETMEDKPDD). Residues 1 to 23 (MSRMNDETMEDKPDDSNGPLSIL) form a disordered region. Residues 20 to 106 (LSILMDSVNN…VILVLKNPLG (87 aa)) form the Sm domain.

It belongs to the snRNP core protein family.

The protein resides in the nucleus. Its subcellular location is the cytoplasm. It is found in the cytosol. Its function is as follows. Plays a role in pre-mRNA splicing as a core component of the spliceosomal U1, U2, U4 and U5 small nuclear ribonucleoproteins (snRNPs), the building blocks of the spliceosome. This chain is Probable small nuclear ribonucleoprotein Sm D2 (snrpd2), found in Dictyostelium discoideum (Social amoeba).